A 164-amino-acid chain; its full sequence is UPF0304 protein KPK_1463 (164 aa).

Belongs to the UPF0304 family.

In Klebsiella pneumoniae (strain 342), this protein is UPF0304 protein KPK_1463.